The chain runs to 587 residues: Tripartite motif-containing protein 29 (587 aa).

Residues 1 to 71 (MEGADACRSN…SGEGKSGLFS (71 aa)) are disordered. Phosphoserine occurs at positions 21, 28, 58, and 104. At tyrosine 106 the chain carries Phosphotyrosine. The B box-type zinc-finger motif lies at 220–260 (FEARKCPLHGKTMELFCQTDQTCICYLCMFQEHKNHSTVTV). Positions 225, 228, 247, and 252 each coordinate Zn(2+). The stretch at 259–348 (TVEEAKAEKE…AVDQVKVIVD (90 aa)) forms a coiled coil. Residue threonine 476 is modified to Phosphothreonine. Phosphoserine is present on serine 489.

As to quaternary structure, interacts with VIM and HINT1. Interacts with IKBKG/NEMO. Interacts with STING1.

The protein localises to the cytoplasm. The protein resides in the lysosome. Functionally, plays a crucial role in the regulation of macrophage activation in response to viral or bacterial infections within the respiratory tract. Mechanistically, TRIM29 interacts with IKBKG/NEMO in the lysosome where it induces its 'Lys-48' ubiquitination and subsequent degradation. In turn, the expression of type I interferons and the production of pro-inflammatory cytokines are inhibited. Additionally, induces the 'Lys-48' ubiquitination of STING1 in a similar way, leading to its degradation. The chain is Tripartite motif-containing protein 29 (Trim29) from Mus musculus (Mouse).